A 100-amino-acid chain; its full sequence is Urease subunit gamma (100 aa).

It belongs to the urease gamma subunit family. As to quaternary structure, heterotrimer of UreA (gamma), UreB (beta) and UreC (alpha) subunits. Three heterotrimers associate to form the active enzyme.

Its subcellular location is the cytoplasm. It carries out the reaction urea + 2 H2O + H(+) = hydrogencarbonate + 2 NH4(+). Its pathway is nitrogen metabolism; urea degradation; CO(2) and NH(3) from urea (urease route): step 1/1. This Delftia acidovorans (strain DSM 14801 / SPH-1) protein is Urease subunit gamma.